The chain runs to 348 residues: Replication-associated protein (348 aa).

Over residues 1-17 (MRAPASSAASNRPGPSN) the composition is skewed to low complexity. The tract at residues 1-22 (MRAPASSAASNRPGPSNHPTPR) is disordered. Positions 22 to 125 (RWNSKQFFLT…NGDSDEMGEL (104 aa)) constitute a CRESS-DNA virus Rep endonuclease domain. Positions 29–32 (FLTY) match the RCR-1 motif. Positions 63, 71, and 73 each coordinate a divalent metal cation. The RCR-2 motif lies at 71-73 (HLH). Residue Tyr111 is the For DNA cleavage activity of the active site. An RCR-3 motif is present at residues 111 to 114 (YISK). Residues 176–188 (SAAALFTEPPPVY) form an oligomerization region. 228–235 (GPSRTGKT) contributes to the ATP binding site. Residues 251 to 269 (VDFTHYDKDAIYNVIDDVP) form a transactivation region. A Nuclear localization signal motif is present at residues 291 to 301 (KYGKKKKIPGG).

This sequence belongs to the geminiviridae Rep protein family. As to quaternary structure, homooligomer. Rep binds to repeated DNA motifs (iterons). Forms the O-complex, which is a Rep-DNA complex involved in the initiation of RCR. Part of the C- and V-complexes which are RepA-Rep-DNA complexes involved in the c-sense and v-sense transcription. Mg(2+) serves as cofactor. Mn(2+) is required as a cofactor.

It localises to the host nucleus. Essential for the replication of viral ssDNA. The closed circular ssDNA genome is first converted to a superhelical dsDNA. Rep binds a specific region at the genome origin of replication. It introduces an endonucleolytic nick within the conserved sequence 5'-TAATATTAC-3' in the intergenic region of the genome present in all geminiviruses, thereby initiating the rolling circle replication (RCR). Following cleavage, binds covalently to the 5'-phosphate of DNA as a tyrosyl ester. The cleavage gives rise to a free 3'-OH that serves as a primer for the cellular DNA polymerase. The polymerase synthesizes the (+) strand DNA by rolling circle mechanism. After one round of replication, a Rep-catalyzed nucleotidyl transfer reaction releases a circular single-stranded virus genome, thereby terminating the replication. Displays origin-specific DNA cleavage, nucleotidyl transferase, ATPase and helicase activities. Acts as an inhibitor of C-sense gene transcription. This chain is Replication-associated protein, found in Miscanthus streak virus (isolate 91) (MiSV).